The following is a 479-amino-acid chain: ATP synthase subunit beta (479 aa).

160-167 lines the ATP pocket; it reads GGAGVGKT.

Belongs to the ATPase alpha/beta chains family. As to quaternary structure, F-type ATPases have 2 components, CF(1) - the catalytic core - and CF(0) - the membrane proton channel. CF(1) has five subunits: alpha(3), beta(3), gamma(1), delta(1), epsilon(1). CF(0) has three main subunits: a(1), b(2) and c(9-12). The alpha and beta chains form an alternating ring which encloses part of the gamma chain. CF(1) is attached to CF(0) by a central stalk formed by the gamma and epsilon chains, while a peripheral stalk is formed by the delta and b chains.

The protein resides in the cell inner membrane. The enzyme catalyses ATP + H2O + 4 H(+)(in) = ADP + phosphate + 5 H(+)(out). Its function is as follows. Produces ATP from ADP in the presence of a proton gradient across the membrane. The catalytic sites are hosted primarily by the beta subunits. The protein is ATP synthase subunit beta of Anaplasma phagocytophilum (strain HZ).